The chain runs to 613 residues: Ribosome-associated molecular chaperone SSB1 (613 aa).

A nucleotide binding domain (NBD) region spans residues 1-391 (MAEGVFQGAI…ILTGQSTSED (391 aa)). Residues 16 to 18 (TTY), Lys73, 205 to 207 (GGT), 271 to 278 (ERAKRTLS), and Gly342 each bind ATP. The interval 392 to 402 (TKDLLLLDVAP) is inter-domain linker. The segment at 403–613 (LSLGVGMQGD…RVVTKAMSSR (211 aa)) is substrate binding domain (SBD). The segment at 516–612 (SDEIEKMVNQ…KRVVTKAMSS (97 aa)) is lid domain (SBDalpha). The short motif at 574-582 (IESALSDAL) is the Nuclear export signal element.

It belongs to the heat shock protein 70 family. Ssb-type Hsp70 subfamily. Binds to ribosomes. Binds close to the ribosomal tunnel exit via contacts with both ribosomal proteins and rRNA. Directly interacts with nascent polypeptides. This interaction is dependent on the ribosome-associated complex (RAC). Interacts with SSE1. Interacts with FES1.

Its subcellular location is the cytoplasm. It carries out the reaction ATP + H2O = ADP + phosphate + H(+). Ribosome-bound, Hsp70-type chaperone that assists in the cotranslational folding of newly synthesized proteins in the cytosol. Stimulates folding by interacting with nascent chains, binding to short, largely hydrophobic sequences exposed by unfolded proteins, thereby stabilizing longer, more slowly translated, and aggregation-prone nascent polypeptides and domains that cannot fold stably until fully synthesized. The Hsp70-protein substrate interaction depends on ATP-binding and on allosteric regulation between the NBD and the SBD. The ATP-bound state is characterized by a fast exchange rate of substrate (low affinity state), while in the ADP-bound state exchange is much slower (high affinity state). During the Hsp70 cycle, the chaperone switches between the ATP-bound state (open conformation) and the ADP-bound state (closed conformation) by major conformational rearrangements involving mainly the lid domain. Ssb cooperates with a specific Hsp40/Hsp70 co-chaperone termed the ribosome-associated complex (RAC), which stimulates the ATPase activity of the ribosome-associated pool of Ssbs and switches it to the high affinity substrate binding state. Hsp110 chaperone SSE1 and FES1 act as nucleotide exchange factors that cause substrate release. The chain is Ribosome-associated molecular chaperone SSB1 (SSB1) from Zygosaccharomyces rouxii (strain ATCC 2623 / CBS 732 / NBRC 1130 / NCYC 568 / NRRL Y-229).